A 480-amino-acid polypeptide reads, in one-letter code: Acyl-coenzyme A synthetase ACSM6, mitochondrial (480 aa).

The transit peptide at 1–21 (MLGRFQPFSLVRSFRLGFEAC) directs the protein to the mitochondrion. ATP-binding positions include 226–234 (TKGTTGAPK), 366–371 (EGYGQT), D453, and R468.

It belongs to the ATP-dependent AMP-binding enzyme family. Monomer. Mg(2+) serves as cofactor. It depends on Mn(2+) as a cofactor.

It is found in the mitochondrion. The enzyme catalyses a medium-chain fatty acid + ATP + CoA = a medium-chain fatty acyl-CoA + AMP + diphosphate. Catalyzes the activation of fatty acids by CoA to produce an acyl-CoA, the first step in fatty acid metabolism. This Homo sapiens (Human) protein is Acyl-coenzyme A synthetase ACSM6, mitochondrial (ACSM6).